The sequence spans 252 residues: NDR1/HIN1-like protein 6 (252 aa).

The interval 1-46 is disordered; that stretch reads MSQHQKIYPVQDPEAATARPTAPLVPRGSSRSEHGDPSKVPLNQRP. The chain crosses the membrane as a helical span at residues 70 to 90; that stretch reads FCFLLLLVVAVGASIGILYLV. 4 N-linked (GlcNAc...) asparagine glycosylation sites follow: N121, N154, N166, and N180.

In terms of assembly, homodimer. Highly expressed in seeds and at lower level in roots and senescing leaves. Expressed in leaves and flowers.

The protein localises to the cell membrane. Its subcellular location is the cytoplasm. The protein resides in the cytosol. Plays an important role in the abiotic stresses-induced abscisic acid (ABA) signaling and biosynthesis. Acts as a positive regulator of ABA-mediated seed germination inhibition. Functions downstream of ABF2/AREB1, ABF4/AREB2 and ABF3. The sequence is that of NDR1/HIN1-like protein 6 from Arabidopsis thaliana (Mouse-ear cress).